A 254-amino-acid polypeptide reads, in one-letter code: Phosphoribosylaminoimidazole-succinocarboxamide synthase (254 aa).

Belongs to the SAICAR synthetase family.

The enzyme catalyses 5-amino-1-(5-phospho-D-ribosyl)imidazole-4-carboxylate + L-aspartate + ATP = (2S)-2-[5-amino-1-(5-phospho-beta-D-ribosyl)imidazole-4-carboxamido]succinate + ADP + phosphate + 2 H(+). It functions in the pathway purine metabolism; IMP biosynthesis via de novo pathway; 5-amino-1-(5-phospho-D-ribosyl)imidazole-4-carboxamide from 5-amino-1-(5-phospho-D-ribosyl)imidazole-4-carboxylate: step 1/2. This is Phosphoribosylaminoimidazole-succinocarboxamide synthase from Brucella abortus (strain S19).